The sequence spans 319 residues: Protein-methionine-sulfoxide reductase catalytic subunit MsrP (319 aa).

Positions 1–54 (MSSFKPSRFSTARLTGDAVTPKSIYLRRREFMIGLGAIAATGAASSAFADPLEA) form a signal peptide, tat-type signal. Mo-molybdopterin is bound by residues N75, 78–79 (YE), C133, N218, R223, and 234–236 (GIK).

This sequence belongs to the MsrP family. In terms of assembly, heterodimer of a catalytic subunit (MsrP) and a heme-binding subunit (MsrQ). Requires Mo-molybdopterin as cofactor. Post-translationally, predicted to be exported by the Tat system. The position of the signal peptide cleavage has not been experimentally proven.

The protein resides in the periplasm. It catalyses the reaction L-methionyl-[protein] + a quinone + H2O = L-methionyl-(S)-S-oxide-[protein] + a quinol. It carries out the reaction L-methionyl-[protein] + a quinone + H2O = L-methionyl-(R)-S-oxide-[protein] + a quinol. Part of the MsrPQ system that repairs oxidized periplasmic proteins containing methionine sulfoxide residues (Met-O), using respiratory chain electrons. Thus protects these proteins from oxidative-stress damage caused by reactive species of oxygen and chlorine generated by the host defense mechanisms. MsrPQ is essential for the maintenance of envelope integrity under bleach stress, rescuing a wide series of structurally unrelated periplasmic proteins from methionine oxidation. The catalytic subunit MsrP is non-stereospecific, being able to reduce both (R-) and (S-) diastereoisomers of methionine sulfoxide. The polypeptide is Protein-methionine-sulfoxide reductase catalytic subunit MsrP (Brucella melitensis biotype 1 (strain ATCC 23456 / CCUG 17765 / NCTC 10094 / 16M)).